A 234-amino-acid chain; its full sequence is uncharacterized protein (234 aa).

Helical transmembrane passes span 5–23 (LFYI…LWSF), 38–60 (IPTA…GFWV), 73–92 (AHIQ…AHGW), 127–149 (AITL…YIWL), 170–192 (GVAI…TVIS), and 197–217 (TQAG…ALAF).

It localises to the cell membrane. This is an uncharacterized protein from Archaeoglobus fulgidus (strain ATCC 49558 / DSM 4304 / JCM 9628 / NBRC 100126 / VC-16).